Here is a 130-residue protein sequence, read N- to C-terminus: S-adenosylmethionine decarboxylase proenzyme (130 aa).

Ser63 (schiff-base intermediate with substrate; via pyruvic acid) is an active-site residue. Ser63 carries the pyruvic acid (Ser); by autocatalysis modification. Residue His68 is the Proton acceptor; for processing activity of the active site. The Proton donor; for catalytic activity role is filled by Cys83.

The protein belongs to the prokaryotic AdoMetDC family. Type 1 subfamily. As to quaternary structure, heterotetramer of two alpha and two beta chains arranged as a dimer of alpha/beta heterodimers. The cofactor is pyruvate. Is synthesized initially as an inactive proenzyme. Formation of the active enzyme involves a self-maturation process in which the active site pyruvoyl group is generated from an internal serine residue via an autocatalytic post-translational modification. Two non-identical subunits are generated from the proenzyme in this reaction, and the pyruvate is formed at the N-terminus of the alpha chain, which is derived from the carboxyl end of the proenzyme. The post-translation cleavage follows an unusual pathway, termed non-hydrolytic serinolysis, in which the side chain hydroxyl group of the serine supplies its oxygen atom to form the C-terminus of the beta chain, while the remainder of the serine residue undergoes an oxidative deamination to produce ammonia and the pyruvoyl group blocking the N-terminus of the alpha chain.

It carries out the reaction S-adenosyl-L-methionine + H(+) = S-adenosyl 3-(methylsulfanyl)propylamine + CO2. It functions in the pathway amine and polyamine biosynthesis; S-adenosylmethioninamine biosynthesis; S-adenosylmethioninamine from S-adenosyl-L-methionine: step 1/1. Catalyzes the decarboxylation of S-adenosylmethionine to S-adenosylmethioninamine (dcAdoMet), the propylamine donor required for the synthesis of the polyamines spermine and spermidine from the diamine putrescine. The sequence is that of S-adenosylmethionine decarboxylase proenzyme from Thermosipho africanus (strain TCF52B).